The chain runs to 240 residues: Transmembrane protein 65 (240 aa).

Residues Met1–Glu61 constitute a mitochondrion transit peptide. At Pro62–Thr110 the chain is on the cytoplasmic side. A helical membrane pass occupies residues Pro111–Leu131. The Extracellular segment spans residues Asp132 to His142. Residues Ile143–Val165 form a helical membrane-spanning segment. At Ser166–Lys209 the chain is on the cytoplasmic side. The helical transmembrane segment at Ala210–Gly230 threads the bilayer. At Glu231–Ser240 the chain is on the extracellular side.

As to quaternary structure, monomer. Homodimer. Interacts with GJA1. Interacts weakly with DSP. Interacts with SCN1B. Predominantly expressed the ventricular tissue (at protein level).

It localises to the cell membrane. The protein resides in the mitochondrion inner membrane. Its function is as follows. Essential for maintaining proper cardiac intercalated disk (ICD) structure and function as well as cardiac conduction velocity in the heart. Its association with SCN1B is required for stabilizing the perinexus in the ICD and for localization of GJA1 and SCN5A to the ICD. May regulate the function of the gap junction protein GJA1 and may contribute to the stability and proper localization of GJA1 to cardiac intercalated disk thereby regulating gap junction communication. May also play a role in the regulation of mitochondrial respiration and mitochondrial DNA copy number maintenance. This is Transmembrane protein 65 (TMEM65) from Homo sapiens (Human).